A 348-amino-acid polypeptide reads, in one-letter code: F-box protein At2g20380 (348 aa).

The F-box domain occupies S14–R60.

In Arabidopsis thaliana (Mouse-ear cress), this protein is F-box protein At2g20380.